A 725-amino-acid polypeptide reads, in one-letter code: MHDHITNTGGKCPVMHGALTTSSMATNMEWWPKALNLDILHQHDHKTNPMGANFNYQDAVKTLDVDALKRDLHALMTDSQDWWPADWGHYGGLMIRMTWHAAGTYRIADGRGGAGTGNQRFAPINSWPDNTNLDKARRLLWPLKKKYGNKLSWADLIAYAGTIAYESMGLKTFGFAFGREDIWHPEKDIYWGSEKEWLAPSDNPHSRYSGERDLENPLAAVMMGLIYVNPEGVDGNPDPLKTAHDIRITFSRMAMNDEETVALTAGGHTVGKCHGNGDATLLGPEPEAADLDDQGLGWLNKTQRGIGRNTVTSGIEGAWTTYPTQWDNGYFRLLLNYDWELKKSPAGAWQWEPINIKEEDKPVDVEDPSIRLSPIMTDADMAMKMDPDYRQISERFYQDPAYFAETFARAWFKLTHRDMGPKSRYIGPDVPQEDLLWQDPIPAGKTDYDPQAVKDKIAASGLSVSEMVCTAWDSARTFRGSDKRGGANGARIRLAPQKDWAGNEPARLAKVLPVLEAIATESGASVADVIVLAGNVGIEQAAQAAGVEITVPFAPGRGDATAEMTDVEGFAVLEPLHDGYRNWLQKDYVVSPEELMLDRTQLMGLTAPEMTVLVGGMRVLGTNYGGTKHGVLTDREGALTNDFFVNLTDMKYTWKPAGKNLYEIGDRHTGEVKWTATRVDLVFGCNSILRAYAEVYAQDDSNEKFIQDFVAAWTKVMNADRFDLA.

Residues 99–227 constitute a cross-link (tryptophyl-tyrosyl-methioninium (Trp-Tyr) (with M-253)); sequence WHAAGTYRIA…LAAVMMGLIY (129 aa). His-100 (proton acceptor) is an active-site residue. Positions 227-253 form a cross-link, tryptophyl-tyrosyl-methioninium (Tyr-Met) (with W-99); sequence YVNPEGVDGNPDPLKTAHDIRITFSRM. His-268 is a binding site for heme b.

Belongs to the peroxidase family. Peroxidase/catalase subfamily. Homodimer or homotetramer. Heme b serves as cofactor. Formation of the three residue Trp-Tyr-Met cross-link is important for the catalase, but not the peroxidase activity of the enzyme.

The catalysed reaction is H2O2 + AH2 = A + 2 H2O. It carries out the reaction 2 H2O2 = O2 + 2 H2O. In terms of biological role, bifunctional enzyme with both catalase and broad-spectrum peroxidase activity. This is Catalase-peroxidase from Picosynechococcus sp. (strain ATCC 27264 / PCC 7002 / PR-6) (Agmenellum quadruplicatum).